Here is a 180-residue protein sequence, read N- to C-terminus: uncharacterized protein (180 aa).

An N-terminal signal peptide occupies residues 1-30; the sequence is MRHKIITFILAVVVIIIIGNMIGGGGGSEA. Positions 25–46 are disordered; it reads GGGSEATSKTSSSSKAETEKTY. The span at 29 to 39 shows a compositional bias: low complexity; sequence EATSKTSSSSK.

Its subcellular location is the secreted. This is an uncharacterized protein from Bacillus subtilis (strain 168).